A 166-amino-acid chain; its full sequence is UPF0251 protein UNCMA_27150 (166 aa).

This sequence belongs to the UPF0251 family.

This is UPF0251 protein UNCMA_27150 from Methanocella arvoryzae (strain DSM 22066 / NBRC 105507 / MRE50).